A 180-amino-acid chain; its full sequence is Large ribosomal subunit protein uL18m (180 aa).

The protein belongs to the universal ribosomal protein uL18 family. In terms of assembly, component of the mitochondrial ribosome large subunit (39S) which comprises a 16S rRNA and about 50 distinct proteins.

It localises to the mitochondrion. Its function is as follows. Together with thiosulfate sulfurtransferase (TST), acts as a mitochondrial import factor for the cytosolic 5S rRNA. The precursor form shows RNA chaperone activity; is able to fold the 5S rRNA into an import-competent conformation that is recognized by rhodanese (TST). Both the cytoplasmic and mitochondrial forms are able to bind to the helix IV-loop D in the gamma domain of the 5S rRNA. The sequence is that of Large ribosomal subunit protein uL18m (MRPL18) from Bos taurus (Bovine).